The sequence spans 800 residues: Cation/H(+) antiporter 19 (800 aa).

Transmembrane regions (helical) follow at residues 30 to 50 (FALP…RLLA), 60 to 77 (RVIA…SALG), 92 to 112 (LTVL…LVGL), 127 to 147 (LLIA…TSFV), 158 to 178 (QLPF…PVLA), 196 to 216 (MSAA…AIAL), 224 to 244 (LVSV…VVAI), 278 to 298 (FVTD…GIVA), 315 to 335 (LVSG…TDVT), 343 to 363 (WGLL…GTVG), 375 to 395 (AVTL…VLNI), and 408 to 428 (AILV…VMLI). The disordered stretch occupies residues 776–800 (ADTRPLVEEDAEYDQSSRDISDLTA). Over residues 790-800 (QSSRDISDLTA) the composition is skewed to basic and acidic residues.

It belongs to the monovalent cation:proton antiporter 2 (CPA2) transporter (TC 2.A.37) family. CHX (TC 2.A.37.4) subfamily. Expressed in the whole plant but preferentially in pollen.

Its subcellular location is the membrane. May operate as a cation/H(+) antiporter. The polypeptide is Cation/H(+) antiporter 19 (CHX19) (Arabidopsis thaliana (Mouse-ear cress)).